A 522-amino-acid chain; its full sequence is Maturase K (522 aa).

The protein belongs to the intron maturase 2 family. MatK subfamily.

The protein resides in the plastid. The protein localises to the chloroplast. Its function is as follows. Usually encoded in the trnK tRNA gene intron. Probably assists in splicing its own and other chloroplast group II introns. The protein is Maturase K of Iris orientalis (Yellowband iris).